We begin with the raw amino-acid sequence, 138 residues long: Putative membrane protein ORF6 (138 aa).

A run of 2 helical transmembrane segments spans residues 4-20 (LTII…HAVL) and 37-53 (VVVL…LMTI).

It is found in the membrane. This Ictalurid herpesvirus 1 (strain Auburn) (IcHV-1) protein is Putative membrane protein ORF6 (ORF6).